The following is a 173-amino-acid chain: Ribosome maturation factor RimP (173 aa).

Belongs to the RimP family.

The protein resides in the cytoplasm. Its function is as follows. Required for maturation of 30S ribosomal subunits. The sequence is that of Ribosome maturation factor RimP from Chlorobaculum tepidum (strain ATCC 49652 / DSM 12025 / NBRC 103806 / TLS) (Chlorobium tepidum).